The sequence spans 107 residues: MTEFTLSDLEKIVATRARAAPEESWTAKLVAAGQKKAAKKLGEEAVETVIAAIGDDRKNLVDESADLLYHLMVVLNIAAIPLQDVMSELARRTSQSGLQEKANRQNP.

Belongs to the PRA-PH family.

The protein localises to the cytoplasm. It catalyses the reaction 1-(5-phospho-beta-D-ribosyl)-ATP + H2O = 1-(5-phospho-beta-D-ribosyl)-5'-AMP + diphosphate + H(+). It functions in the pathway amino-acid biosynthesis; L-histidine biosynthesis; L-histidine from 5-phospho-alpha-D-ribose 1-diphosphate: step 2/9. This Sinorhizobium medicae (strain WSM419) (Ensifer medicae) protein is Phosphoribosyl-ATP pyrophosphatase.